The chain runs to 200 residues: Large ribosomal subunit protein uL22c (200 aa).

The protein belongs to the universal ribosomal protein uL22 family. In terms of assembly, part of the 50S ribosomal subunit.

Its subcellular location is the plastid. The protein localises to the chloroplast. Its function is as follows. This protein binds specifically to 23S rRNA. Functionally, the globular domain of the protein is located near the polypeptide exit tunnel on the outside of the subunit, while an extended beta-hairpin is found that lines the wall of the exit tunnel in the center of the 70S ribosome. The protein is Large ribosomal subunit protein uL22c (rpl22) of Medicago sativa (Alfalfa).